The chain runs to 234 residues: MSLLYEGKAKRIFSTDEDGVLRVEYKDEVTAGNGAKKDHIDGKGRLNNQITSIIFEHLKKHGIKSHFIEQTSETEQLVRSVEIIPLEVVVRNIAAGSITKRLGFEKGHEFETPLVEFFYKNDDLNDPLITDDHVKLLNIANDEEIAKLKKMALEINKALVEMLDSINLRLVDFKIEFGRTEDGDILLADEISPDTCRIWEKDSDTNFDKDVYREDRGSIIDTYQTFLNKLEALK.

It belongs to the SAICAR synthetase family.

It carries out the reaction 5-amino-1-(5-phospho-D-ribosyl)imidazole-4-carboxylate + L-aspartate + ATP = (2S)-2-[5-amino-1-(5-phospho-beta-D-ribosyl)imidazole-4-carboxamido]succinate + ADP + phosphate + 2 H(+). Its pathway is purine metabolism; IMP biosynthesis via de novo pathway; 5-amino-1-(5-phospho-D-ribosyl)imidazole-4-carboxamide from 5-amino-1-(5-phospho-D-ribosyl)imidazole-4-carboxylate: step 1/2. This chain is Phosphoribosylaminoimidazole-succinocarboxamide synthase, found in Staphylococcus carnosus (strain TM300).